The primary structure comprises 543 residues: Adenosine deaminase 2 (543 aa).

Positions Met1–Ser26 are cleaved as a signal peptide. The segment covering Ile31–Ser54 has biased composition (low complexity). The tract at residues Ile31–Pro58 is disordered. Asn126 is a glycosylation site (N-linked (GlcNAc...) asparagine). The Zn(2+) site is built by His144 and His146. Residue Asn179 is glycosylated (N-linked (GlcNAc...) asparagine). Trp232 to Phe239 is a binding site for substrate. 2 N-linked (GlcNAc...) asparagine glycosylation sites follow: Asn309 and Asn326. Gly355 serves as a coordination point for substrate. Zn(2+) is bound at residue His389. The active-site Proton donor is Glu392. Asn397 is a glycosylation site (N-linked (GlcNAc...) asparagine). The Proton acceptor role is filled by His414. Zn(2+) is bound at residue Asp471. Asp472 is a substrate binding site. Residues Asn508 and Asn514 are each glycosylated (N-linked (GlcNAc...) asparagine).

Belongs to the metallo-dependent hydrolases superfamily. Adenosine and AMP deaminases family. ADGF subfamily. Zn(2+) is required as a cofactor.

It is found in the secreted. It catalyses the reaction adenosine + H2O + H(+) = inosine + NH4(+). In terms of biological role, adenosine deaminase that may contribute to the degradation of extracellular adenosine, a signaling molecule that controls a variety of cellular responses. May play a role in the regulation of cell proliferation. The polypeptide is Adenosine deaminase 2 (Dictyostelium discoideum (Social amoeba)).